The primary structure comprises 55 residues: ASATWGAAYPACENNCRKKYDLCIRCQGKWAGKRGKCAAHCIIQKNNCKGKCKKE.

At proline 10 the chain carries Hydroxyproline. Cystine bridges form between cysteine 12-cysteine 52, cysteine 16-cysteine 48, cysteine 23-cysteine 41, and cysteine 26-cysteine 37.

This sequence belongs to the worm B-toxin family.

It is found in the secreted. This toxin increases the excitability of nerves by delaying the inactivation of the voltage-gated sodium channel (Nav). Only acts on some crustacean. Is more abundant, but 15-fold less toxic than neurotoxin B-II. In Cerebratulus lacteus (Milky ribbon worm), this protein is Neurotoxin B-IV.